The chain runs to 206 residues: Thymidylate kinase (206 aa).

11 to 18 is a binding site for ATP; it reads GPEGAGKT.

It belongs to the thymidylate kinase family.

It catalyses the reaction dTMP + ATP = dTDP + ADP. Functionally, phosphorylation of dTMP to form dTDP in both de novo and salvage pathways of dTTP synthesis. The chain is Thymidylate kinase (tmk) from Deinococcus radiodurans (strain ATCC 13939 / DSM 20539 / JCM 16871 / CCUG 27074 / LMG 4051 / NBRC 15346 / NCIMB 9279 / VKM B-1422 / R1).